Reading from the N-terminus, the 635-residue chain is Threonine--tRNA ligase (635 aa).

Residues 1–61 (MVSIRLPDGS…DHDVALAIVT (61 aa)) form the TGS domain. The tract at residues 242–533 (DHRKLGKQLD…LIEHHAGAMP (292 aa)) is catalytic. Zn(2+) contacts are provided by C333, H384, and H510.

This sequence belongs to the class-II aminoacyl-tRNA synthetase family. Homodimer. Requires Zn(2+) as cofactor.

The protein resides in the cytoplasm. It carries out the reaction tRNA(Thr) + L-threonine + ATP = L-threonyl-tRNA(Thr) + AMP + diphosphate + H(+). Its function is as follows. Catalyzes the attachment of threonine to tRNA(Thr) in a two-step reaction: L-threonine is first activated by ATP to form Thr-AMP and then transferred to the acceptor end of tRNA(Thr). Also edits incorrectly charged L-seryl-tRNA(Thr). The sequence is that of Threonine--tRNA ligase from Paraburkholderia phymatum (strain DSM 17167 / CIP 108236 / LMG 21445 / STM815) (Burkholderia phymatum).